Here is an 898-residue protein sequence, read N- to C-terminus: MTQITVKALSEEIGTPVDRLLEQLADAGMNKAVADHVSEDEKQKLLAHLRKEHGDATGSEPTRLTLQRKTRSTLSVNAGGGKSKNVQVEVRKKRTYVKRSSVEDEATREAEEAAMRAAEEQAKREAEEAAQRAAEEKAKREAEEAAKREAEAKRMAEEKAKRETQAATQPRSDEEKLKQEAARKEAEALKRRQEEEARRKAEEESRRQLEKVRELAEKNGERWSADKETVGDMQENTDYHVTTSRYAREAEDEADLHEEGARRRSTKANKRKMSSRDDNQERDSRPRGGKAGRKGRINKPMSMQHGFDKTAVVAKADVVVGETIVVSELAQKMSVKATEVIKVMMKMGAMATINQVIDQETAQLVAEEMGHKVVLRKENELEEAILSDRDDKFEEVSRAPVVTIMGHVDHGKTSTLDYIRRTHVASGEAGGITQHIGAYHVETPNGMITFLDTPGHAAFTAMRARGAQATDIVVLVVAADDGVMPQTVEAIQHAKAAGVPLIVAVNKIDKDTANPDNVKTELSQYNVMPEEWGGDNMFVHISAKQGTNIDGLLEAILLQAEVLELKAVKQGMASGVVIESRLDKGRGPVATVLVQSGTLRKGDIVLCGQEYGRVRAMRDEVGNEVEEAGPSIPVEILGLSGVPAAGDEATVVRDERKAREVANYRAGKFREVKLARQQKSKLENMFSNMTAGDVAELNIVLKADVQGSVEAIADSLTKLSTDEVKVNIVGSGVGGITETDAVLAAASNAIVVGFNVRADASARRMIEAENIDLRYYSIIYQLIDEVKQAMSGMLSPEFKQEIIGLAEVRDVFKSPKLGAIAGCMVTEGVIKRNAPIRVLRDNVVIYEGELESLRRFKDDVAEVKNGYECGIGVKNYNDVRVGDQIEVFETIEIQRTID.

Residues 51–302 form a disordered region; the sequence is KEHGDATGSE…RKGRINKPMS (252 aa). 2 stretches are compositionally biased toward basic and acidic residues: residues 100–164 and 171–230; these read SSVE…KRET and RSDE…KETV. The segment covering 234 to 245 has biased composition (polar residues); it reads QENTDYHVTTSR. The segment covering 263–273 has biased composition (basic residues); that stretch reads RRSTKANKRKM. A compositionally biased stretch (basic and acidic residues) spans 274-286; that stretch reads SSRDDNQERDSRP. A compositionally biased stretch (basic residues) spans 287–297; that stretch reads RGGKAGRKGRI. The tr-type G domain occupies 397-566; sequence SRAPVVTIMG…LLQAEVLELK (170 aa). Positions 406 to 413 are G1; sequence GHVDHGKT. Position 406–413 (406–413) interacts with GTP; it reads GHVDHGKT. Positions 431–435 are G2; sequence GITQH. The interval 452–455 is G3; the sequence is DTPG. Residues 452 to 456 and 506 to 509 each bind GTP; these read DTPGH and NKID. A G4 region spans residues 506–509; sequence NKID. The segment at 542 to 544 is G5; sequence SAK.

The protein belongs to the TRAFAC class translation factor GTPase superfamily. Classic translation factor GTPase family. IF-2 subfamily.

It localises to the cytoplasm. In terms of biological role, one of the essential components for the initiation of protein synthesis. Protects formylmethionyl-tRNA from spontaneous hydrolysis and promotes its binding to the 30S ribosomal subunits. Also involved in the hydrolysis of GTP during the formation of the 70S ribosomal complex. The polypeptide is Translation initiation factor IF-2 (Vibrio cholerae serotype O1 (strain ATCC 39541 / Classical Ogawa 395 / O395)).